The chain runs to 503 residues: AMP phosphorylase (503 aa).

AMP contacts are provided by residues G168, 194–199 (SRAITS), and T203. D256 (proton donor) is an active-site residue. Residues S264 and K288 each contribute to the AMP site.

It belongs to the thymidine/pyrimidine-nucleoside phosphorylase family. Type 2 subfamily. Forms an exceptionally large macromolecular structure (&gt;40-mers) in solution.

It carries out the reaction AMP + phosphate = alpha-D-ribose 1,5-bisphosphate + adenine. The catalysed reaction is CMP + phosphate = cytosine + alpha-D-ribose 1,5-bisphosphate. The enzyme catalyses UMP + phosphate = alpha-D-ribose 1,5-bisphosphate + uracil. With respect to regulation, AMP phosphorolysis is allosterically regulated by the substrate AMP. In terms of biological role, catalyzes the conversion of AMP and phosphate to adenine and ribose 1,5-bisphosphate (R15P). Exhibits phosphorylase activity toward CMP, dCMP and UMP in addition to AMP. Functions in an archaeal AMP degradation pathway, together with R15P isomerase and RubisCO. The sequence is that of AMP phosphorylase from Thermococcus kodakarensis (strain ATCC BAA-918 / JCM 12380 / KOD1) (Pyrococcus kodakaraensis (strain KOD1)).